Reading from the N-terminus, the 747-residue chain is UPF0313 protein PA4928 (747 aa).

The Radical SAM core domain maps to 371–640 (AYEMIRFSVN…KSDQQRRLHK (270 aa)). [4Fe-4S] cluster is bound by residues cysteine 385, cysteine 389, and cysteine 392. The tract at residues 670-747 (GKHHLVPTYQ…KKSRQPNIPR (78 aa)) is disordered.

Belongs to the UPF0313 family. [4Fe-4S] cluster serves as cofactor.

This Pseudomonas aeruginosa (strain ATCC 15692 / DSM 22644 / CIP 104116 / JCM 14847 / LMG 12228 / 1C / PRS 101 / PAO1) protein is UPF0313 protein PA4928.